The primary structure comprises 424 residues: Phosphomethylpyrimidine synthase (424 aa).

Residues M94, Y123, H162, 184–186 (SRG), 225–228 (NGMR), and E264 contribute to the substrate site. A Zn(2+)-binding site is contributed by H268. A substrate-binding site is contributed by Y291. Residue H332 coordinates Zn(2+). C406, C409, and C413 together coordinate [4Fe-4S] cluster.

The protein belongs to the ThiC family. [4Fe-4S] cluster serves as cofactor.

It catalyses the reaction 5-amino-1-(5-phospho-beta-D-ribosyl)imidazole + S-adenosyl-L-methionine = 4-amino-2-methyl-5-(phosphooxymethyl)pyrimidine + CO + 5'-deoxyadenosine + formate + L-methionine + 3 H(+). The protein operates within cofactor biosynthesis; thiamine diphosphate biosynthesis. Functionally, catalyzes the synthesis of the hydroxymethylpyrimidine phosphate (HMP-P) moiety of thiamine from aminoimidazole ribotide (AIR) in a radical S-adenosyl-L-methionine (SAM)-dependent reaction. This Methanoculleus marisnigri (strain ATCC 35101 / DSM 1498 / JR1) protein is Phosphomethylpyrimidine synthase.